The following is an 84-amino-acid chain: Small ribosomal subunit protein bS20 (84 aa).

The disordered stretch occupies residues 1 to 32; that stretch reads MPRHESAKKRMRQNEKRQKRNKSQKSRVRTKI.

Belongs to the bacterial ribosomal protein bS20 family.

Binds directly to 16S ribosomal RNA. In Salinibacter ruber (strain DSM 13855 / M31), this protein is Small ribosomal subunit protein bS20.